The primary structure comprises 908 residues: Probable serine/threonine-protein kinase DDB_G0278521 (908 aa).

Residues methionine 1–arginine 153 are Extracellular-facing. A helical transmembrane segment spans residues isoleucine 154–isoleucine 174. Topologically, residues leucine 175 to aspartate 908 are cytoplasmic. 5 ANK repeats span residues leucine 258–asparagine 289, threonine 300–aspartate 326, lysine 330–glutamine 361, serine 362–isoleucine 391, and asparagine 395–serine 424. A compositionally biased stretch (low complexity) spans asparagine 461–serine 472. The tract at residues asparagine 461–isoleucine 491 is disordered. The span at asparagine 480–glutamine 490 shows a compositional bias: polar residues. Residues glutamate 495–glycine 524 form an ANK 6 repeat. One can recognise a Protein kinase domain in the interval phenylalanine 530–leucine 817. ATP-binding positions include isoleucine 536–valine 544 and lysine 557. The Proton acceptor role is filled by aspartate 677.

It belongs to the protein kinase superfamily. TKL Ser/Thr protein kinase family.

The protein resides in the membrane. It carries out the reaction L-seryl-[protein] + ATP = O-phospho-L-seryl-[protein] + ADP + H(+). The enzyme catalyses L-threonyl-[protein] + ATP = O-phospho-L-threonyl-[protein] + ADP + H(+). The chain is Probable serine/threonine-protein kinase DDB_G0278521 from Dictyostelium discoideum (Social amoeba).